We begin with the raw amino-acid sequence, 201 residues long: Prostamide/prostaglandin F synthase (201 aa).

Tyrosine 108 is subject to Phosphotyrosine.

The protein belongs to the peroxiredoxin-like PRXL2 family. Prostamide/prostaglandin F synthase subfamily.

It is found in the cytoplasm. The protein localises to the cytosol. The catalysed reaction is prostaglandin H2 + [thioredoxin]-dithiol = prostaglandin F2alpha + [thioredoxin]-disulfide. It carries out the reaction prostamide F2alpha + [thioredoxin]-disulfide = prostamide H2 + [thioredoxin]-dithiol. Its function is as follows. Catalyzes the reduction of prostaglandin-ethanolamide H(2) (prostamide H(2)) to prostamide F(2alpha) with NADPH as proton donor. Also able to reduce prostaglandin H(2) to prostaglandin F(2alpha). This Bos taurus (Bovine) protein is Prostamide/prostaglandin F synthase (PRXL2B).